A 178-amino-acid chain; its full sequence is MTIFSSLNQFSKGHVSWLLLLLFIIFFEACALYFQHVMMLAPCVMCIYERVAMMGIGGAAIIGLIAPNNALFRWLGLIGWGLSSYKGLMLAMQHVDYQFNPSPFATCDLFVTFPSWAPLNQWVPWMFEAYGDCSKIVWQFFDLSMPQWLVVIFAGNLVALALIVIAQFFPVKRKNPIR.

Residues 1-16 lie on the Cytoplasmic side of the membrane; it reads MTIFSSLNQFSKGHVS. A helical transmembrane segment spans residues 17–33; that stretch reads WLLLLLFIIFFEACALY. Over 34–51 the chain is Periplasmic; it reads FQHVMMLAPCVMCIYERV. Cysteine 43 and cysteine 46 are oxidised to a cystine. The helical transmembrane segment at 52 to 67 threads the bilayer; sequence AMMGIGGAAIIGLIAP. The Cytoplasmic portion of the chain corresponds to 68 to 74; that stretch reads NNALFRW. The helical transmembrane segment at 75–92 threads the bilayer; sequence LGLIGWGLSSYKGLMLAM. Residues 93 to 147 are Periplasmic-facing; that stretch reads QHVDYQFNPSPFATCDLFVTFPSWAPLNQWVPWMFEAYGDCSKIVWQFFDLSMPQ. Cysteine 107 and cysteine 133 are disulfide-bonded. A helical membrane pass occupies residues 148 to 166; the sequence is WLVVIFAGNLVALALIVIA. Residues 167 to 178 are Cytoplasmic-facing; that stretch reads QFFPVKRKNPIR.

The protein belongs to the DsbB family.

It localises to the cell inner membrane. In terms of biological role, required for disulfide bond formation in some periplasmic proteins. Acts by oxidizing the DsbA protein. This is Disulfide bond formation protein B from Vibrio parahaemolyticus serotype O3:K6 (strain RIMD 2210633).